Consider the following 537-residue polypeptide: Cytochrome P450 CYP12A2 (537 aa).

Cysteine 483 lines the heme pocket.

Belongs to the cytochrome P450 family. Heme is required as a cofactor.

The sequence is that of Cytochrome P450 CYP12A2 (CYP12A2) from Musca domestica (House fly).